Consider the following 520-residue polypeptide: Transactivator/viroplasmin protein (520 aa).

A disordered region spans residues 487-520 (QDASADSGPKDGPPPTRSIVEKEDVPTTSSKQVD).

It belongs to the caulimoviridae viroplasmin family.

The protein resides in the host cytoplasm. In terms of biological role, enhances the ribosomal termination-reinitiation event leading to the translation of major open reading frames on the polycistronic viral RNAs. The sequence is that of Transactivator/viroplasmin protein from Cauliflower mosaic virus (strain CM-1841) (CaMV).